A 184-amino-acid chain; its full sequence is Photosystem I assembly protein Ycf4 (184 aa).

Helical transmembrane passes span 19 to 39 (ISNF…LLVG) and 57 to 77 (IIFF…LFIS).

It belongs to the Ycf4 family.

The protein resides in the plastid. It localises to the chloroplast thylakoid membrane. In terms of biological role, seems to be required for the assembly of the photosystem I complex. The sequence is that of Photosystem I assembly protein Ycf4 from Drimys granadensis.